Reading from the N-terminus, the 104-residue chain is Large ribosomal subunit protein uL24 (104 aa).

This sequence belongs to the universal ribosomal protein uL24 family. Part of the 50S ribosomal subunit.

In terms of biological role, one of two assembly initiator proteins, it binds directly to the 5'-end of the 23S rRNA, where it nucleates assembly of the 50S subunit. Functionally, one of the proteins that surrounds the polypeptide exit tunnel on the outside of the subunit. The chain is Large ribosomal subunit protein uL24 from Buchnera aphidicola subsp. Baizongia pistaciae (strain Bp).